Reading from the N-terminus, the 232-residue chain is MAAAVAELWETLKQAIVAYTGLSPAAFFTAVAAAAALYHVVSGIFAGPPPPPPPRPRDEPEAEPLPPPVQLGEVSEEELRQYDGSDPKKPLLMAIKGQIYDVTQSRMFYGPGGPYALFAGKDASRALAKMSFEPQDLTGDISGLGPFELDALQDWEYKFMGKYVKVGTVKKTVPVEDGAPSTSPETTETAAAAEPEKAPATEEKPREVSSEEVKEKEDAVAAAAPDEGAKES.

A helical membrane pass occupies residues 25–45 (AAFFTAVAAAAALYHVVSGIF). Disordered regions lie at residues 48 to 77 (PPPP…VSEE) and 172 to 232 (TVPV…AKES). Residues 71-170 (LGEVSEEELR…GKYVKVGTVK (100 aa)) form the Cytochrome b5 heme-binding domain. The tract at residues 73–170 (EVSEEELRQY…GKYVKVGTVK (98 aa)) is steroid-binding. Residues 179-193 (APSTSPETTETAAAA) are compositionally biased toward low complexity. Residues 194 to 219 (EPEKAPATEEKPREVSSEEVKEKEDA) show a composition bias toward basic and acidic residues.

Belongs to the cytochrome b5 family. MAPR subfamily. Interacts with SERL2. As to expression, expressed in leaf sheaths, leaf blades and panicles.

It is found in the cell membrane. In terms of biological role, binds multiple steroid compounds. May act as a coreceptor with SERL2 and enhance its endocytosis. This is Membrane steroid-binding protein 1 from Oryza sativa subsp. japonica (Rice).